We begin with the raw amino-acid sequence, 306 residues long: Ribonuclease Z (306 aa).

Residues H63, H65, D67, H68, H141, D211, and H269 each coordinate Zn(2+). D67 serves as the catalytic Proton acceptor.

The protein belongs to the RNase Z family. In terms of assembly, homodimer. The cofactor is Zn(2+).

It catalyses the reaction Endonucleolytic cleavage of RNA, removing extra 3' nucleotides from tRNA precursor, generating 3' termini of tRNAs. A 3'-hydroxy group is left at the tRNA terminus and a 5'-phosphoryl group is left at the trailer molecule.. Functionally, zinc phosphodiesterase, which displays some tRNA 3'-processing endonuclease activity. Probably involved in tRNA maturation, by removing a 3'-trailer from precursor tRNA. This is Ribonuclease Z from Macrococcus caseolyticus (strain JCSC5402) (Macrococcoides caseolyticum).